The following is a 287-amino-acid chain: Taxis protein CheF2 (287 aa).

In terms of assembly, interacts with chemotaxis (Che) proteins as well as flagella accessory (Fla) proteins.

Involved in taxis signal transduction. In Halobacterium salinarum (strain ATCC 29341 / DSM 671 / R1), this protein is Taxis protein CheF2 (cheF2).